We begin with the raw amino-acid sequence, 113 residues long: Cell cycle protein GpsB (113 aa).

Residues 37–63 (KDYETYATLVKSLRQEIADLKEELTRK) adopt a coiled-coil conformation. The disordered stretch occupies residues 61–82 (TRKPQVSSAPSPSHPDPIDVAA).

The protein belongs to the GpsB family. In terms of assembly, forms polymers through the coiled coil domains. Interacts with PBP1, MreC and EzrA.

The protein localises to the cytoplasm. In terms of biological role, divisome component that associates with the complex late in its assembly, after the Z-ring is formed, and is dependent on DivIC and PBP2B for its recruitment to the divisome. Together with EzrA, is a key component of the system that regulates PBP1 localization during cell cycle progression. Its main role could be the removal of PBP1 from the cell pole after pole maturation is completed. Also contributes to the recruitment of PBP1 to the division complex. Not essential for septum formation. This is Cell cycle protein GpsB from Streptococcus pneumoniae (strain ATCC 700669 / Spain 23F-1).